Reading from the N-terminus, the 360-residue chain is 3-dehydroquinate synthase (360 aa).

NAD(+)-binding positions include 71–76 (DGEQYK), 105–109 (GVVGD), 129–130 (TT), K142, K151, and 169–172 (TLNT). Zn(2+)-binding residues include E184, H248, and H265.

Belongs to the sugar phosphate cyclases superfamily. Dehydroquinate synthase family. The cofactor is Co(2+). Zn(2+) is required as a cofactor. NAD(+) serves as cofactor.

The protein localises to the cytoplasm. The enzyme catalyses 7-phospho-2-dehydro-3-deoxy-D-arabino-heptonate = 3-dehydroquinate + phosphate. It functions in the pathway metabolic intermediate biosynthesis; chorismate biosynthesis; chorismate from D-erythrose 4-phosphate and phosphoenolpyruvate: step 2/7. In terms of biological role, catalyzes the conversion of 3-deoxy-D-arabino-heptulosonate 7-phosphate (DAHP) to dehydroquinate (DHQ). The polypeptide is 3-dehydroquinate synthase (Coxiella burnetii (strain RSA 331 / Henzerling II)).